The following is a 536-amino-acid chain: Probable serine/threonine-protein kinase DDB_G0268550 (536 aa).

The region spanning 14 to 305 is the Protein kinase domain; the sequence is EIIEKNYRKG…IDVLEIHPFL (292 aa). ATP contacts are provided by residues 20-28 and Lys-51; that span reads YRKGGFSKI. Asp-147 serves as the catalytic Proton acceptor. Residues 161–192 are disordered; sequence DNNNNNNNNNNNNNNNNNNNSNINDDNNNSNS.

This sequence belongs to the protein kinase superfamily. Ser/Thr protein kinase family. Mg(2+) serves as cofactor.

The enzyme catalyses L-seryl-[protein] + ATP = O-phospho-L-seryl-[protein] + ADP + H(+). It carries out the reaction L-threonyl-[protein] + ATP = O-phospho-L-threonyl-[protein] + ADP + H(+). The protein is Probable serine/threonine-protein kinase DDB_G0268550 of Dictyostelium discoideum (Social amoeba).